We begin with the raw amino-acid sequence, 383 residues long: MLYALLLLFGGVSTVSSLRVAVVGEGVIGLSTATAILDLAEKRNIPAPEIHIFHHKPFEKILSRHIAGLFRIDSGSEIDRKYGYDTFEKLATLWREYGGLSGVQLVSGHILSDSKTKLDSQRESYGSLVYNYRDLAEPELFGPTSLFDLPRNTTTRGIHYTAYTSEGLRFCPFLKKELMTKGVRFTQRRIGNLEELGAEFDVVVNSAGLLGGVLAGDDAGNMKPIRGVLIRVDAPWQKHFLYRDFSTITIPVIDHVYMGTVKQEGAFGPNNVTSADIQDITSRYVALQPSFKRVHMLSSFVGYRPGRKQVRVEKQIRETNGSKKFTVVHNYGHSGNGFTLGYGSAVHAAHIVLDLPLDAYHGLVPEPLPINATISEWVKYLDD.

A signal peptide spans 1-17 (MLYALLLLFGGVSTVSS). FAD contacts are provided by Lys56 and Ser63. 3 N-linked (GlcNAc...) asparagine glycosylation sites follow: Asn152, Asn271, and Asn320. FAD is bound at residue Thr339. Asn371 carries an N-linked (GlcNAc...) asparagine glycan.

It belongs to the DAMOX/DASOX family. FAD is required as a cofactor. As to expression, in both sexes, present in coelomocytes (at protein level). Expressed in hypodermal cells and the proximal gonadal sheath cells in adult hermaphrodites (at protein level). Also expressed in probable head mesodermal cells and unidentified cells in the head, and vulval muscles in adult hermaphrodites. Expressed in the seminal vesicle, spicule and tail cells in adult males (at protein level).

It localises to the secreted. The enzyme catalyses D-aspartate + O2 + H2O = oxaloacetate + H2O2 + NH4(+). The catalysed reaction is D-glutamate + O2 + H2O = H2O2 + 2-oxoglutarate + NH4(+). Its function is as follows. Selectively catalyzes the oxidative deamination of acidic amino acids. Plays a role in the egg-laying events and maturation processes of the reproductive organs. The protein is D-aspartate oxidase 3 (ddo-3) of Caenorhabditis elegans.